The primary structure comprises 489 residues: Cytochrome P450 2C41 (489 aa).

Residue cysteine 434 coordinates heme.

Belongs to the cytochrome P450 family. Heme is required as a cofactor.

The protein localises to the endoplasmic reticulum membrane. It localises to the microsome membrane. It carries out the reaction an organic molecule + reduced [NADPH--hemoprotein reductase] + O2 = an alcohol + oxidized [NADPH--hemoprotein reductase] + H2O + H(+). Functionally, cytochromes P450 are a group of heme-thiolate monooxygenases. In liver microsomes, this enzyme is involved in an NADPH-dependent electron transport pathway. It oxidizes a variety of structurally unrelated compounds, including steroids, fatty acids, and xenobiotics. The sequence is that of Cytochrome P450 2C41 (CYP2C41) from Canis lupus familiaris (Dog).